A 182-amino-acid polypeptide reads, in one-letter code: MGHPKKPRKQYDTPSHPWNADRIKEENRLANKYGLKNKKEIWKAESRVKRYRRDARIILGMDIDERADKEKELLDHLVRAGFISPNAKLEEVLDLNVEDILRRRLQSLVFKRGLSHTAKEARLFVVHGHITLNGKKINAPGHLVEKADEENIDFYPGSSVAKQFETQETEEVAAEEEPKDEE.

2 disordered regions span residues 1-23 and 158-182; these read MGHPKKPRKQYDTPSHPWNADRI and SSVAKQFETQETEEVAAEEEPKDEE. The S4 RNA-binding domain maps to 103-170; it reads RRLQSLVFKR…AKQFETQETE (68 aa). The span at 167 to 182 shows a compositional bias: acidic residues; the sequence is QETEEVAAEEEPKDEE.

Belongs to the universal ribosomal protein uS4 family. Part of the 30S ribosomal subunit. Contacts protein S5. The interaction surface between S4 and S5 is involved in control of translational fidelity.

One of the primary rRNA binding proteins, it binds directly to 16S rRNA where it nucleates assembly of the body of the 30S subunit. Its function is as follows. With S5 and S12 plays an important role in translational accuracy. The chain is Small ribosomal subunit protein uS4 from Methanosphaera stadtmanae (strain ATCC 43021 / DSM 3091 / JCM 11832 / MCB-3).